The primary structure comprises 312 residues: Acetaldehyde dehydrogenase 2 (312 aa).

11–14 (SGNI) contributes to the NAD(+) binding site. The active-site Acyl-thioester intermediate is Cys129. NAD(+) contacts are provided by residues 160 to 168 (SAGPGTRAN) and Asn287.

It belongs to the acetaldehyde dehydrogenase family.

The enzyme catalyses acetaldehyde + NAD(+) + CoA = acetyl-CoA + NADH + H(+). The chain is Acetaldehyde dehydrogenase 2 from Novosphingobium aromaticivorans (strain ATCC 700278 / DSM 12444 / CCUG 56034 / CIP 105152 / NBRC 16084 / F199).